A 383-amino-acid polypeptide reads, in one-letter code: MGLRASGTGFVVLVLLQSCAAYKLICYYTSWSQYREGDGSCFPDAIDPFLCTHIIYSFANISNNEIDTWEWNDVTLYDTLNTLKNRNPKLKTLLSVGGWNFGPERFSKIASKTQSRRTFIKSVPPFLRTHGFDGLDLAWLYPGRRDKRHLTGLVKEMKAEFAREAQAGTERLLLSAAVSAGKIAIDRGYDIAQISRHLDFISLLTYDFHGAWRQTVGHHSPLFRGQEDASSDRFSNADYAVSYMLRLGAPANKLVMGIPTFGRSFTLASSKTDVGAPISGPGIPGRFTKEKGILAYYEICDFLHGATTHRFRDQQVPYATKGNQWVAYDDQESVKNKARYLKNRQLAGAMVWALDLDDFRGTFCGQNLTFPLTSAVKDVLAEV.

An N-terminal signal peptide occupies residues 1-21; sequence MGLRASGTGFVVLVLLQSCAA. In terms of domain architecture, GH18 spans 22–383; sequence YKLICYYTSW…SAVKDVLAEV (362 aa). An intrachain disulfide couples Cys-26 to Cys-51. Asn-60 carries N-linked (GlcNAc...) asparagine glycosylation. Chitin-binding positions include 70 to 71, 97 to 100, Tyr-141, 204 to 207, and Arg-263; these read EW, GGWN, and LTYD. Cys-300 and Cys-364 are disulfide-bonded. Positions 324–338 are important for AKT1 activation and IL8 production; sequence QWVAYDDQESVKNKA. Trp-352 serves as a coordination point for chitin. Asn-367 is a glycosylation site (N-linked (GlcNAc...) asparagine).

Belongs to the glycosyl hydrolase 18 family. Monomer.

Its subcellular location is the secreted. The protein localises to the extracellular space. It is found in the cytoplasm. It localises to the perinuclear region. The protein resides in the endoplasmic reticulum. Functionally, carbohydrate-binding lectin with a preference for chitin. Has no chitinase activity. May play a role in tissue remodeling and in the capacity of cells to respond to and cope with changes in their environment. Plays a role in T-helper cell type 2 (Th2) inflammatory response and IL-13-induced inflammation, regulating allergen sensitization, inflammatory cell apoptosis, dendritic cell accumulation and M2 macrophage differentiation. Facilitates invasion of pathogenic enteric bacteria into colonic mucosa and lymphoid organs. Mediates activation of AKT1 signaling pathway and subsequent IL8 production in colonic epithelial cells. Regulates antibacterial responses in lung by contributing to macrophage bacterial killing, controlling bacterial dissemination and augmenting host tolerance. Also regulates hyperoxia-induced injury, inflammation and epithelial apoptosis in lung. The chain is Chitinase-3-like protein 1 (CHI3L1) from Capra hircus (Goat).